The following is a 534-amino-acid chain: MPIKVLSSLDVARTQWYHFKAIIVAGMGLFTDAYDLFCIAPVMKMISHVYYNGDSINTAVLSTSYAIALLGTATGQLVFGYLGDRVGRRRVYGLCLIIMILSSFGCGFSVCTTRRSCVMVSLGFFRFFLGLGIGGDYPLSATIMSEFANKRTRGAFIAAVFSMQGLGILVSSAVTMAVCVAFKRSGGGLEVDAAAPTEADLAWRLILMIGALPAALTFYWRMLMPETARYTALVENNIVQAAKDMQRVMSRSHISDEATTDPPPPPPPPSYKLFSRCFFRLHGRDLFAASFNWFLVDIVFYTSNLLLSHIFSHYSKKPSTAENVYDAAFEVAELGAIIAACSTIPGYWFTVYFIDKIGRVKIQIMGFFFMAVIYLVAGIPYSWYWSKHEHNNKGFMVLYGLVFFFCNFGPNTTTFIIPAEHFPARFRSTCHGISGAAGKLGAIVGTVGFLWATKKMESDDKNQIYPEVNRMRIAFLILGGVCIAGILVTYFFTKETMGRSLEENEHDQDNNAESEDEPQIVDGQSSVSTLLQTR.

At 1 to 21 the chain is on the cytoplasmic side; sequence MPIKVLSSLDVARTQWYHFKA. A helical membrane pass occupies residues 22-42; the sequence is IIVAGMGLFTDAYDLFCIAPV. Topologically, residues 43–61 are extracellular; it reads MKMISHVYYNGDSINTAVL. Residues 62–82 traverse the membrane as a helical segment; sequence STSYAIALLGTATGQLVFGYL. Over 83-90 the chain is Cytoplasmic; sequence GDRVGRRR. A helical membrane pass occupies residues 91-111; the sequence is VYGLCLIIMILSSFGCGFSVC. At 112–123 the chain is on the extracellular side; the sequence is TTRRSCVMVSLG. Residues 124 to 144 form a helical membrane-spanning segment; sequence FFRFFLGLGIGGDYPLSATIM. The Cytoplasmic portion of the chain corresponds to 145-153; sequence SEFANKRTR. The chain crosses the membrane as a helical span at residues 154 to 174; it reads GAFIAAVFSMQGLGILVSSAV. The Extracellular portion of the chain corresponds to 175–199; the sequence is TMAVCVAFKRSGGGLEVDAAAPTEA. A helical membrane pass occupies residues 200 to 220; sequence DLAWRLILMIGALPAALTFYW. At 221-281 the chain is on the cytoplasmic side; it reads RMLMPETARY…KLFSRCFFRL (61 aa). A helical transmembrane segment spans residues 282 to 302; that stretch reads HGRDLFAASFNWFLVDIVFYT. At 303–333 the chain is on the extracellular side; that stretch reads SNLLLSHIFSHYSKKPSTAENVYDAAFEVAE. Residues 334–354 form a helical membrane-spanning segment; it reads LGAIIAACSTIPGYWFTVYFI. Topologically, residues 355-361 are cytoplasmic; that stretch reads DKIGRVK. A helical membrane pass occupies residues 362–382; the sequence is IQIMGFFFMAVIYLVAGIPYS. The Extracellular segment spans residues 383 to 396; sequence WYWSKHEHNNKGFM. The chain crosses the membrane as a helical span at residues 397-417; that stretch reads VLYGLVFFFCNFGPNTTTFII. Residues 418-431 lie on the Cytoplasmic side of the membrane; the sequence is PAEHFPARFRSTCH. The chain crosses the membrane as a helical span at residues 432-452; sequence GISGAAGKLGAIVGTVGFLWA. Topologically, residues 453–472 are extracellular; sequence TKKMESDDKNQIYPEVNRMR. Residues 473–493 traverse the membrane as a helical segment; that stretch reads IAFLILGGVCIAGILVTYFFT. Residues 494 to 534 are Cytoplasmic-facing; it reads KETMGRSLEENEHDQDNNAESEDEPQIVDGQSSVSTLLQTR. A disordered region spans residues 501 to 534; that stretch reads LEENEHDQDNNAESEDEPQIVDGQSSVSTLLQTR. The segment covering 510–519 has biased composition (acidic residues); the sequence is NNAESEDEPQ. At S514 the chain carries Phosphoserine. The segment covering 522 to 534 has biased composition (polar residues); it reads DGQSSVSTLLQTR.

This sequence belongs to the major facilitator superfamily. Phosphate:H(+) symporter (TC 2.A.1.9) family. In terms of tissue distribution, in roots.

The protein localises to the membrane. Functionally, high-affinity transporter for external inorganic phosphate. The chain is Probable inorganic phosphate transporter 1-8 (PHT1-8) from Arabidopsis thaliana (Mouse-ear cress).